A 372-amino-acid chain; its full sequence is GTP cyclohydrolase 1 type 2 homolog (372 aa).

5 residues coordinate a divalent metal cation: His-67, His-68, Asp-106, His-332, and Glu-335.

The protein belongs to the GTP cyclohydrolase I type 2/NIF3 family. In terms of assembly, homohexamer.

In Halalkalibacterium halodurans (strain ATCC BAA-125 / DSM 18197 / FERM 7344 / JCM 9153 / C-125) (Bacillus halodurans), this protein is GTP cyclohydrolase 1 type 2 homolog.